A 328-amino-acid polypeptide reads, in one-letter code: GMP reductase (328 aa).

The Thioimidate intermediate role is filled by Cys176. An NADP(+)-binding site is contributed by 205–228 (IIADGGIRTHGDIAKSVRFGATMV).

It belongs to the IMPDH/GMPR family. GuaC type 2 subfamily.

It carries out the reaction IMP + NH4(+) + NADP(+) = GMP + NADPH + 2 H(+). Functionally, catalyzes the irreversible NADPH-dependent deamination of GMP to IMP. It functions in the conversion of nucleobase, nucleoside and nucleotide derivatives of G to A nucleotides, and in maintaining the intracellular balance of A and G nucleotides. This chain is GMP reductase, found in Shouchella clausii (strain KSM-K16) (Alkalihalobacillus clausii).